The chain runs to 776 residues: Reticulon-1 (776 aa).

Disordered regions lie at residues 1 to 101 (MAAP…KDGE), 137 to 168 (SESP…DSGI), 205 to 245 (VKHQ…PAPV), and 285 to 580 (LTEI…APPP). Phosphoserine is present on serine 327. Residues 328 to 341 (PGSITPPSSGTEPS) are compositionally biased toward low complexity. A phosphoserine mark is found at serine 350, serine 352, and serine 487. Basic and acidic residues predominate over residues 497 to 511 (AIREETGVRAEERAP). The Reticulon domain maps to 589–776 (AIDLLYWRDI…KIPGAKRHAE (188 aa)). Helical transmembrane passes span 603–623 (IVFG…VVSV) and 705–725 (FAVL…LTLL).

Interacts with NDRG1. Interacts with BACE1. As to quaternary structure, interacts with TMEM33. In terms of assembly, interacts with UGCG; regulates the ceramide glucosyltransferase activity of UGCG. Post-translationally, isoforms RTN1-A and RTN1-B are phosphorylated. Expressed in neural and neuroendocrine tissues and cell cultures derived therefrom. Expression of isoform RTN1-C is strongly correlated with neuronal differentiation.

It is found in the endoplasmic reticulum membrane. The protein resides in the golgi apparatus membrane. In terms of biological role, inhibits amyloid precursor protein processing, probably by blocking BACE1 activity. The sequence is that of Reticulon-1 (RTN1) from Homo sapiens (Human).